Here is a 230-residue protein sequence, read N- to C-terminus: Protein STK_02290 (230 aa).

One can recognise an AMMECR1 domain in the interval 15–213 (NLGKVLIKIA…EEKPKSEKIL (199 aa)).

This chain is Protein STK_02290, found in Sulfurisphaera tokodaii (strain DSM 16993 / JCM 10545 / NBRC 100140 / 7) (Sulfolobus tokodaii).